The chain runs to 457 residues: Argininosuccinate lyase (457 aa).

It belongs to the lyase 1 family. Argininosuccinate lyase subfamily.

The protein localises to the cytoplasm. It carries out the reaction 2-(N(omega)-L-arginino)succinate = fumarate + L-arginine. Its pathway is amino-acid biosynthesis; L-arginine biosynthesis; L-arginine from L-ornithine and carbamoyl phosphate: step 3/3. This is Argininosuccinate lyase from Haemophilus influenzae (strain ATCC 51907 / DSM 11121 / KW20 / Rd).